Consider the following 199-residue polypeptide: Peptidyl-tRNA hydrolase (199 aa).

Residue Y15 coordinates tRNA. The active-site Proton acceptor is H20. The tRNA site is built by Y66, N68, and N114.

It belongs to the PTH family. As to quaternary structure, monomer.

The protein localises to the cytoplasm. It carries out the reaction an N-acyl-L-alpha-aminoacyl-tRNA + H2O = an N-acyl-L-amino acid + a tRNA + H(+). Its function is as follows. Hydrolyzes ribosome-free peptidyl-tRNAs (with 1 or more amino acids incorporated), which drop off the ribosome during protein synthesis, or as a result of ribosome stalling. Functionally, catalyzes the release of premature peptidyl moieties from peptidyl-tRNA molecules trapped in stalled 50S ribosomal subunits, and thus maintains levels of free tRNAs and 50S ribosomes. This chain is Peptidyl-tRNA hydrolase, found in Burkholderia cenocepacia (strain ATCC BAA-245 / DSM 16553 / LMG 16656 / NCTC 13227 / J2315 / CF5610) (Burkholderia cepacia (strain J2315)).